The following is a 506-amino-acid chain: Alpha-ketoglutarate-dependent dioxygenase FTO (506 aa).

Thr-4 bears the Phosphothreonine mark. Positions 32-326 (TPKDDEFYQQ…SSTHRVAECS (295 aa)) are fe2OG dioxygenase domain. Residues Arg-96 and Tyr-108 each coordinate substrate. Asn-204 provides a ligand contact to 2-oxoglutarate. A loop L1; predicted to block binding of double-stranded DNA or RNA region spans residues 212 to 223 (PYLKEEPYFGMG). An N6-acetyllysine modification is found at Lys-215. Fe cation contacts are provided by His-230 and Asp-232. 230 to 233 (HHDE) is a binding site for substrate. Tyr-294 lines the 2-oxoglutarate pocket. His-306 serves as a coordination point for Fe cation. 2-oxoglutarate-binding positions include 315–317 (RFS), Thr-319, and Arg-321.

Belongs to the fto family. Monomer. May also exist as homodimer. Fe(2+) serves as cofactor.

The protein resides in the nucleus. It is found in the nucleus speckle. The protein localises to the cytoplasm. It catalyses the reaction a 5'-end (N(7)-methyl 5'-triphosphoguanosine)-(N(6),2'-O-dimethyladenosine) in mRNA + 2-oxoglutarate + O2 = a 5'-end (N(7)-methyl 5'-triphosphoguanosine)-(2'-O-methyladenosine) in mRNA + formaldehyde + succinate + CO2. The enzyme catalyses an N(6)-methyladenosine in mRNA + 2-oxoglutarate + O2 = an adenosine in mRNA + formaldehyde + succinate + CO2. It carries out the reaction N(6)-methyladenosine in U6 snRNA + 2-oxoglutarate + O2 = adenosine in U6 snRNA + formaldehyde + succinate + CO2. The catalysed reaction is a 5'-end (N(7)-methyl 5'-triphosphoguanosine)-(N(6),2'-O-dimethyladenosine) in U6 snRNA + 2-oxoglutarate + O2 = a 5'-end (N(7)-methyl 5'-triphosphoguanosine)-(2'-O-methyladenosine) in U6 snRNA + formaldehyde + succinate + CO2. It catalyses the reaction an N(1)-methyladenosine in tRNA + 2-oxoglutarate + O2 = an adenosine in tRNA + formaldehyde + succinate + CO2. In terms of biological role, RNA demethylase that mediates oxidative demethylation of different RNA species, such as mRNAs, tRNAs and snRNAs, and acts as a regulator of fat mass, adipogenesis and energy homeostasis. Specifically demethylates N(6)-methyladenosine (m6A) RNA, the most prevalent internal modification of messenger RNA (mRNA) in higher eukaryotes. M6A demethylation by FTO affects mRNA expression and stability. Also able to demethylate m6A in U6 small nuclear RNA (snRNA). Mediates demethylation of N(6),2'-O-dimethyladenosine cap (m6A(m)), by demethylating the N(6)-methyladenosine at the second transcribed position of mRNAs and U6 snRNA. Demethylation of m6A(m) in the 5'-cap by FTO affects mRNA stability by promoting susceptibility to decapping. Also acts as a tRNA demethylase by removing N(1)-methyladenine from various tRNAs. Has no activity towards 1-methylguanine. Has no detectable activity towards double-stranded DNA. Also able to repair alkylated DNA and RNA by oxidative demethylation: demethylates single-stranded RNA containing 3-methyluracil, single-stranded DNA containing 3-methylthymine and has low demethylase activity towards single-stranded DNA containing 1-methyladenine or 3-methylcytosine. Ability to repair alkylated DNA and RNA is however unsure in vivo. Involved in the regulation of fat mass, adipogenesis and body weight, thereby contributing to the regulation of body size and body fat accumulation. Involved in the regulation of thermogenesis and the control of adipocyte differentiation into brown or white fat cells. Regulates activity of the dopaminergic midbrain circuitry via its ability to demethylate m6A in mRNAs. Plays an oncogenic role in a number of acute myeloid leukemias by enhancing leukemic oncogene-mediated cell transformation: acts by mediating m6A demethylation of target transcripts such as MYC, CEBPA, ASB2 and RARA, leading to promote their expression. The polypeptide is Alpha-ketoglutarate-dependent dioxygenase FTO (FTO) (Canis lupus familiaris (Dog)).